A 582-amino-acid polypeptide reads, in one-letter code: Two-component response regulator ORR26 (582 aa).

In terms of domain architecture, Response regulatory spans R11 to Y126. D62 bears the 4-aspartylphosphate mark. Residues S166–Q182 show a composition bias toward basic and acidic residues. The segment at S166–G187 is disordered. A DNA-binding region (myb-like GARP) is located at residues T189 to S248.

It belongs to the ARR family. Type-B subfamily. Two-component system major event consists of a His-to-Asp phosphorelay between a sensor histidine kinase (HK) and a response regulator (RR). In plants, the His-to-Asp phosphorelay involves an additional intermediate named Histidine-containing phosphotransfer protein (HPt). This multistep phosphorelay consists of a His-Asp-His-Asp sequential transfer of a phosphate group between first a His and an Asp of the HK protein, followed by the transfer to a conserved His of the HPt protein and finally the transfer to an Asp in the receiver domain of the RR protein.

It localises to the nucleus. Functionally, transcriptional activator that binds specific DNA sequence. Functions as a response regulator involved in His-to-Asp phosphorelay signal transduction system. Phosphorylation of the Asp residue in the receiver domain activates the ability of the protein to promote the transcription of target genes. May directly activate some type-A response regulators in response to cytokinins. This chain is Two-component response regulator ORR26, found in Oryza sativa subsp. japonica (Rice).